The primary structure comprises 24 residues: Cupiennin-5a (24 aa).

Expressed by the venom gland.

It localises to the secreted. This chain is Cupiennin-5a, found in Cupiennius salei (American wandering spider).